The primary structure comprises 101 residues: Small ribosomal subunit protein uS14 (101 aa).

The protein belongs to the universal ribosomal protein uS14 family. As to quaternary structure, part of the 30S ribosomal subunit. Contacts proteins S3 and S10.

In terms of biological role, binds 16S rRNA, required for the assembly of 30S particles and may also be responsible for determining the conformation of the 16S rRNA at the A site. The polypeptide is Small ribosomal subunit protein uS14 (Polaromonas sp. (strain JS666 / ATCC BAA-500)).